Reading from the N-terminus, the 188-residue chain is NADH-quinone oxidoreductase subunit I 2 (188 aa).

4Fe-4S ferredoxin-type domains are found at residues 56-88 (HFLK…VVPY) and 98-127 (AKFE…LGQQ). Cysteine 68, cysteine 71, cysteine 74, cysteine 78, cysteine 107, cysteine 110, cysteine 113, and cysteine 117 together coordinate [4Fe-4S] cluster.

Belongs to the complex I 23 kDa subunit family. NDH-1 is composed of 14 different subunits. Subunits NuoA, H, J, K, L, M, N constitute the membrane sector of the complex. The cofactor is [4Fe-4S] cluster.

It localises to the cell inner membrane. The catalysed reaction is a quinone + NADH + 5 H(+)(in) = a quinol + NAD(+) + 4 H(+)(out). NDH-1 shuttles electrons from NADH, via FMN and iron-sulfur (Fe-S) centers, to quinones in the respiratory chain. The immediate electron acceptor for the enzyme in this species is believed to be ubiquinone. Couples the redox reaction to proton translocation (for every two electrons transferred, four hydrogen ions are translocated across the cytoplasmic membrane), and thus conserves the redox energy in a proton gradient. This Rhizobium etli (strain ATCC 51251 / DSM 11541 / JCM 21823 / NBRC 15573 / CFN 42) protein is NADH-quinone oxidoreductase subunit I 2.